The primary structure comprises 956 residues: MASNHPAFSFHQKQVLRQELTQIQSSLNSGGGGGGGGGGGGKSAPGPSGALPTCSACHKMAPRTETPVSSISNSLENALHTSAHSTEESLPKRPLGKHGKVSVEKIDLKGLSHTKNDRSVECSFEVLWSDSSITSVTKSSSEVTEFISKLSQLCPEENLDKLIPCLAGPDSFYVERNHVDLEAGLRFLASAPSHTLKHDHVRKFFSSSSPSQQLQSPSPGNPSLPKVGAVMGVSGRPVCGVAGIPSSQSSAQHHLQHSASTSASLPHCSHTGGTGSALAYRTQVDNSPTILMPSSLQTPQPQEQNGILDWLRKLRLHKYYPVFKQLTMEKFLSLTEEDLNKFESLTMGAKKKLKTQLELEKEKSERRCLNSSAPSLVTSSGVARVTPTSHVGPVQPGRSSSHASELRVEVEPPAHQLPREGSSSEYSSSSSSPMGVQVREESSDSAEESDRRVDIHVEGTEKEKPVMLLAHFPSSSARPTAQVLPVQNETGSSPAAHHPLPPQLMPAASHLAPVRMLNSVHKSDRGGADVKLLSSSVHSLLSLEERNKGPGPRSGTKVDKSFGGAVLDPLPSAAPHPPGQGLSGLVENNAVSPTVSFGPRAKVVHAATLDRVLKTAQQPALTVESSSATTGTPSTVLHVARPPIKLLLASSVPADAAIAGQTSCPNNGQISVPPAIMNPRTALYTANTKVAFSAVSSVPVGPLQGSFCANSNTASPSSHPSTSFASMASLPSCPAPSSSPALSSVPESSFYSGGAGSSSPGNIPASSQSHHHHHHHQQPPAPPQPAPPPPGCIVCTSCGCSGSCGSNGLTVSYANYFQHPFSGPSVLTFPFLPFSPMCGNGYVSTQQYGGGSAFPVVHTPYNGSVTPDPVLGGQSTFAVPPMQNFMAGTAGVYQAQGLVGSTNGSSHKKSGNLSCYNCGATGHRAQDCKQPSMDFNRQGTFRLKYAPPAESLDSTD.

8 disordered regions span residues 25 to 50, 78 to 99, 206 to 229, 243 to 276, 361 to 464, 485 to 505, 543 to 583, and 750 to 786; these read SSLNSGGGGGGGGGGGGKSAPGPSGA, ALHTSAHSTEESLPKRPLGKHG, SSSSPSQQLQSPSPGNPSLPKVGA, GIPSSQSSAQHHLQHSASTSASLPHCSHTGGTGS, KEKS…EKEK, PVQNETGSSPAAHHPLPPQLM, LEER…QGLS, and FYSGGAGSSSPGNIPASSQSHHHHHHHQQPPAPPQPA. Residues 29 to 43 show a composition bias toward gly residues; it reads SGGGGGGGGGGGGKS. Composition is skewed to low complexity over residues 206–225 and 246–265; these read SSSSPSQQLQSPSPGNPSLP and SSQSSAQHHLQHSASTSASL. Polar residues predominate over residues 369–389; that stretch reads LNSSAPSLVTSSGVARVTPTS. A compositionally biased stretch (low complexity) spans 423-432; that stretch reads SSEYSSSSSS. A compositionally biased stretch (basic and acidic residues) spans 438–464; the sequence is VREESSDSAEESDRRVDIHVEGTEKEK. The segment covering 750-768 has biased composition (low complexity); the sequence is FYSGGAGSSSPGNIPASSQ. Residues 913–930 form a CCHC-type zinc finger; it reads LSCYNCGATGHRAQDCKQ.

The sequence is that of Zinc finger CCHC domain-containing protein 14 (Zcchc14) from Mus musculus (Mouse).